The following is a 421-amino-acid chain: UDP-N-acetylglucosamine 1-carboxyvinyltransferase (421 aa).

Residue 22-23 coordinates phosphoenolpyruvate; sequence KN. A UDP-N-acetyl-alpha-D-glucosamine-binding site is contributed by R93. C117 acts as the Proton donor in catalysis. C117 carries the 2-(S-cysteinyl)pyruvic acid O-phosphothioketal modification. UDP-N-acetyl-alpha-D-glucosamine contacts are provided by residues 122-126, D308, and I330; that span reads RPVDL.

Belongs to the EPSP synthase family. MurA subfamily.

The protein localises to the cytoplasm. It carries out the reaction phosphoenolpyruvate + UDP-N-acetyl-alpha-D-glucosamine = UDP-N-acetyl-3-O-(1-carboxyvinyl)-alpha-D-glucosamine + phosphate. Its pathway is cell wall biogenesis; peptidoglycan biosynthesis. Cell wall formation. Adds enolpyruvyl to UDP-N-acetylglucosamine. This Pseudomonas fluorescens (strain SBW25) protein is UDP-N-acetylglucosamine 1-carboxyvinyltransferase.